Consider the following 142-residue polypeptide: Lysosomal enzyme trafficking factor (142 aa).

2 consecutive transmembrane segments (helical) span residues M8–F28 and L76–F96.

This sequence belongs to the LYSET family.

It is found in the golgi apparatus membrane. In terms of biological role, required for mannose-6-phosphate-dependent trafficking of lysosomal enzymes. LYSET bridges GlcNAc-1-phosphate transferase (GNPTAB), to the membrane-bound transcription factor site-1 protease (MBTPS1), thus allowing proteolytic activation of the GNPTAB. GNPTAB is involved in the regulation of M6P-dependent Golgi-to-lysosome trafficking of lysosomal enzymes. LYSET is thus an essential factor for maturation and delivery of lysosomal hydrolases. This Danio rerio (Zebrafish) protein is Lysosomal enzyme trafficking factor (tmem251).